The following is a 227-amino-acid chain: Cleavage and polyadenylation specificity factor subunit 5 (227 aa).

Positions 76 to 201 constitute a Nudix hydrolase domain; that stretch reads MRRTVEGVLI…KLVAAPLFEL (126 aa). Residues 102-104 form an interaction with RNA region; the sequence is TFF. Positions 109–130 match the Nudix box motif; it reads GELNPGEDEVEGLKRLMTEILG.

This sequence belongs to the Nudix hydrolase family. CPSF5 subfamily. Homodimer (via N- and C-terminus); binds RNA as homodimer. Component of the cleavage factor Im (CFIm) complex.

Its subcellular location is the nucleus. It is found in the cytoplasm. Component of the cleavage factor Im (CFIm) complex that functions as an activator of the pre-mRNA 3'-end cleavage and polyadenylation processing required for the maturation of pre-mRNA into functional mRNAs. CFIm contributes to the recruitment of multiprotein complexes on specific sequences on the pre-mRNA 3'-end, so called cleavage and polyadenylation signals (pA signals). Most pre-mRNAs contain multiple pA signals, resulting in alternative cleavage and polyadenylation (APA) producing mRNAs with variable 3'-end formation. The CFIm complex acts as a key regulator of cleavage and polyadenylation site choice during APA through its binding to 5'-UGUA-3' elements localized in the 3'-untranslated region (UTR) for a huge number of pre-mRNAs. Binds to 5'-UGUA-3' elements localized upstream of pA signals that act as enhancers of pre-mRNA 3'-end processing. The homodimer mediates simultaneous sequence-specific recognition of two 5'-UGUA-3' elements within the pre-mRNA. Plays a role in somatic cell fate transitions and pluripotency by regulating widespread changes in gene expression through an APA-dependent function. Binds to chromatin. Binds to, but does not hydrolyze mono- and di-adenosine nucleotides. The polypeptide is Cleavage and polyadenylation specificity factor subunit 5 (Xenopus laevis (African clawed frog)).